We begin with the raw amino-acid sequence, 299 residues long: ATP phosphoribosyltransferase (299 aa).

It belongs to the ATP phosphoribosyltransferase family. Long subfamily. The cofactor is Mg(2+).

Its subcellular location is the cytoplasm. The catalysed reaction is 1-(5-phospho-beta-D-ribosyl)-ATP + diphosphate = 5-phospho-alpha-D-ribose 1-diphosphate + ATP. It participates in amino-acid biosynthesis; L-histidine biosynthesis; L-histidine from 5-phospho-alpha-D-ribose 1-diphosphate: step 1/9. Its activity is regulated as follows. Feedback inhibited by histidine. In terms of biological role, catalyzes the condensation of ATP and 5-phosphoribose 1-diphosphate to form N'-(5'-phosphoribosyl)-ATP (PR-ATP). Has a crucial role in the pathway because the rate of histidine biosynthesis seems to be controlled primarily by regulation of HisG enzymatic activity. This chain is ATP phosphoribosyltransferase, found in Shewanella oneidensis (strain ATCC 700550 / JCM 31522 / CIP 106686 / LMG 19005 / NCIMB 14063 / MR-1).